We begin with the raw amino-acid sequence, 189 residues long: Segregation and condensation protein B (189 aa).

It belongs to the ScpB family. In terms of assembly, homodimer. Homodimerization may be required to stabilize the binding of ScpA to the Smc head domains. Component of a cohesin-like complex composed of ScpA, ScpB and the Smc homodimer, in which ScpA and ScpB bind to the head domain of Smc. The presence of the three proteins is required for the association of the complex with DNA.

The protein resides in the cytoplasm. Participates in chromosomal partition during cell division. May act via the formation of a condensin-like complex containing Smc and ScpA that pull DNA away from mid-cell into both cell halves. This Clostridium tetani (strain Massachusetts / E88) protein is Segregation and condensation protein B.